Here is a 71-residue protein sequence, read N- to C-terminus: uncharacterized protein (71 aa).

Over residues Met-1 to Lys-10 the composition is skewed to basic residues. The disordered stretch occupies residues Met-1–Asn-20. The chain crosses the membrane as a helical span at residues Leu-21 to Ile-43.

The protein localises to the membrane. This is an uncharacterized protein from Saccharomyces cerevisiae (strain ATCC 204508 / S288c) (Baker's yeast).